The following is a 138-amino-acid chain: Phosphoribosyl-AMP cyclohydrolase (138 aa).

D84 serves as a coordination point for Mg(2+). C85 serves as a coordination point for Zn(2+). D86 and D88 together coordinate Mg(2+). Residues C102 and C109 each coordinate Zn(2+).

The protein belongs to the PRA-CH family. As to quaternary structure, homodimer. Mg(2+) is required as a cofactor. Zn(2+) serves as cofactor.

The protein resides in the cytoplasm. The enzyme catalyses 1-(5-phospho-beta-D-ribosyl)-5'-AMP + H2O = 1-(5-phospho-beta-D-ribosyl)-5-[(5-phospho-beta-D-ribosylamino)methylideneamino]imidazole-4-carboxamide. The protein operates within amino-acid biosynthesis; L-histidine biosynthesis; L-histidine from 5-phospho-alpha-D-ribose 1-diphosphate: step 3/9. In terms of biological role, catalyzes the hydrolysis of the adenine ring of phosphoribosyl-AMP. The polypeptide is Phosphoribosyl-AMP cyclohydrolase (Burkholderia orbicola (strain MC0-3)).